Here is a 504-residue protein sequence, read N- to C-terminus: Maturase K (504 aa).

It belongs to the intron maturase 2 family. MatK subfamily.

It localises to the plastid. Its subcellular location is the chloroplast. Functionally, usually encoded in the trnK tRNA gene intron. Probably assists in splicing its own and other chloroplast group II introns. This Pachira aquatica (Guiana chestnut) protein is Maturase K.